The chain runs to 391 residues: S-adenosylmethionine synthase 5 (391 aa).

E9 serves as a coordination point for Mg(2+). Position 15 (H15) interacts with ATP. Residue E43 coordinates K(+). 2 residues coordinate L-methionine: E56 and Q99. ATP contacts are provided by residues 167–169, 235–238, D246, 252–253, A269, K273, and K277; these read DGK, SGRF, and RK. Residue D246 participates in L-methionine binding. K277 contributes to the L-methionine binding site.

This sequence belongs to the AdoMet synthase family. Homotetramer. Mn(2+) is required as a cofactor. It depends on Mg(2+) as a cofactor. Co(2+) serves as cofactor. Requires K(+) as cofactor.

It localises to the cytoplasm. It carries out the reaction L-methionine + ATP + H2O = S-adenosyl-L-methionine + phosphate + diphosphate. Its pathway is amino-acid biosynthesis; S-adenosyl-L-methionine biosynthesis; S-adenosyl-L-methionine from L-methionine: step 1/1. Functionally, catalyzes the formation of S-adenosylmethionine from methionine and ATP. The reaction comprises two steps that are both catalyzed by the same enzyme: formation of S-adenosylmethionine (AdoMet) and triphosphate, and subsequent hydrolysis of the triphosphate. The protein is S-adenosylmethionine synthase 5 (METK5) of Vitis vinifera (Grape).